The sequence spans 138 residues: Sec-independent protein translocase protein TatB (138 aa).

The chain crosses the membrane as a helical span at residues 2 to 18 (SFGEIIVILVVAILVLG). Positions 109 to 138 (NNLSGQNLNTEEKPNLSKLETQDKNGKINV) are disordered. A compositionally biased stretch (basic and acidic residues) spans 118 to 138 (TEEKPNLSKLETQDKNGKINV).

This sequence belongs to the TatB family. As to quaternary structure, the Tat system comprises two distinct complexes: a TatABC complex, containing multiple copies of TatA, TatB and TatC subunits, and a separate TatA complex, containing only TatA subunits. Substrates initially bind to the TatABC complex, which probably triggers association of the separate TatA complex to form the active translocon.

It localises to the cell inner membrane. Functionally, part of the twin-arginine translocation (Tat) system that transports large folded proteins containing a characteristic twin-arginine motif in their signal peptide across membranes. Together with TatC, TatB is part of a receptor directly interacting with Tat signal peptides. TatB may form an oligomeric binding site that transiently accommodates folded Tat precursor proteins before their translocation. This Campylobacter jejuni subsp. jejuni serotype O:2 (strain ATCC 700819 / NCTC 11168) protein is Sec-independent protein translocase protein TatB.